A 245-amino-acid chain; its full sequence is Glycerophosphodiester phosphodiesterase (245 aa).

The GP-PDE domain maps to T2 to R241. H7 serves as the catalytic Proton acceptor. A divalent metal cation contacts are provided by E34 and D36. H49 (proton donor) is an active-site residue. Residue E110 coordinates a divalent metal cation.

The protein belongs to the glycerophosphoryl diester phosphodiesterase family. It depends on Ni(2+) as a cofactor. The cofactor is Co(2+). Requires Mn(2+) as cofactor.

The enzyme catalyses a sn-glycero-3-phosphodiester + H2O = an alcohol + sn-glycerol 3-phosphate + H(+). With respect to regulation, inhibited by EDTA and various organic solvents such as chloroform, toluene or benzene. In terms of biological role, glycerophosphodiester phosphodiesterase hydrolyzes glycerophosphodiesters into glycerol-3-phosphate (G3P) and the corresponding alcohol. Can hydrolyze the model substrate bis-(p-nitrophenyl phosphate) (bis(pNPP)) to p-nitrophenol. Can also catalyze the degradation of diphenyl phosphate (DPHP) to phenyl phosphate (PHP). DPHP is an aryl phosphate ester used as a chemical additive and an industrial catalyst that can easily spread to the environment and exhibits toxicity toward organisms. The chain is Glycerophosphodiester phosphodiesterase from Bacillus altitudinis.